Reading from the N-terminus, the 231-residue chain is Ribosome maturation factor RimM (231 aa).

A disordered region spans residues 1–29 (MSERDSGSSGRAKAKRQPGAKAPFGPFVR). One can recognise a PRC barrel domain in the interval 150-231 (TDEYYWVDLV…KIIVDWEADY (82 aa)).

Belongs to the RimM family. In terms of assembly, binds ribosomal protein uS19.

Its subcellular location is the cytoplasm. Functionally, an accessory protein needed during the final step in the assembly of 30S ribosomal subunit, possibly for assembly of the head region. Essential for efficient processing of 16S rRNA. May be needed both before and after RbfA during the maturation of 16S rRNA. It has affinity for free ribosomal 30S subunits but not for 70S ribosomes. This chain is Ribosome maturation factor RimM, found in Paraburkholderia phymatum (strain DSM 17167 / CIP 108236 / LMG 21445 / STM815) (Burkholderia phymatum).